The chain runs to 61 residues: Large ribosomal subunit protein eL37 (61 aa).

Residues cysteine 19, cysteine 22, cysteine 34, and cysteine 37 each contribute to the Zn(2+) site. A C4-type zinc finger spans residues 19–37; that stretch reads CRRCGRNAYNVSKHYCAAC.

The protein belongs to the eukaryotic ribosomal protein eL37 family. Requires Zn(2+) as cofactor.

Its function is as follows. Binds to the 23S rRNA. The chain is Large ribosomal subunit protein eL37 (rpl37e) from Saccharolobus solfataricus (strain ATCC 35092 / DSM 1617 / JCM 11322 / P2) (Sulfolobus solfataricus).